The sequence spans 592 residues: Membrane protein insertase YidC (592 aa).

5 helical membrane passes run 8 to 28 (LFIA…FVMG), 363 to 385 (ALGQ…MFPL), 430 to 450 (INPL…FALY), 493 to 513 (IWLI…GLTM), and 531 to 551 (IFAF…AGLV).

This sequence belongs to the OXA1/ALB3/YidC family. Type 1 subfamily. As to quaternary structure, interacts with the Sec translocase complex via SecD. Specifically interacts with transmembrane segments of nascent integral membrane proteins during membrane integration.

Its subcellular location is the cell inner membrane. Functionally, required for the insertion and/or proper folding and/or complex formation of integral membrane proteins into the membrane. Involved in integration of membrane proteins that insert both dependently and independently of the Sec translocase complex, as well as at least some lipoproteins. Aids folding of multispanning membrane proteins. This is Membrane protein insertase YidC from Maricaulis maris (strain MCS10) (Caulobacter maris).